We begin with the raw amino-acid sequence, 283 residues long: Protein FdhE homolog (283 aa).

Belongs to the FdhE family.

It is found in the cytoplasm. Necessary for formate dehydrogenase activity. The polypeptide is Protein FdhE homolog (Aquifex aeolicus (strain VF5)).